Here is a 977-residue protein sequence, read N- to C-terminus: AP-2 complex subunit alpha-1 (977 aa).

The tract at residues 614–702 is disordered; sequence AKLKRKKGPG…PSLGPTPEEA (89 aa). Residues S626 and S652 each carry the phosphoserine modification. Over residues 646-657 the composition is skewed to low complexity; that stretch reads PTPSTVSTPSPS. The residue at position 653 (T653) is a Phosphothreonine. A Phosphoserine modification is found at S655. Over residues 666–675 the composition is skewed to pro residues; sequence APPPAAPPAP.

Belongs to the adaptor complexes large subunit family. In terms of assembly, adaptor protein complex 2 (AP-2) is a heterotetramer composed of two large adaptins (alpha-type subunit AP2A1 or AP2A2 and beta-type subunit AP2B1), a medium adaptin (mu-type subunit AP2M1) and a small adaptin (sigma-type subunit AP2S1). Interacts with HIP1 and RAB11FIP2. Interacts with SLC12A5. Interacts with clathrin. Interacts with SGIP1. Interacts with RFTN1. Interacts with KIAA1107. Interacts with PICALM. Together with AP2B1 and AP2M1, it interacts with ADAM10; this interaction facilitates ADAM10 endocytosis from the plasma membrane during long-term potentiation in hippocampal neurons. Interacts with ABCB11; this interaction regulates cell membrane expression of ABCB11 through its internalization in a clathrin-dependent manner and its subsequent degradation. Probably interacts with ACE2 (via endocytic sorting signal motif); the interaction is inhibited by ACE2 phosphorylation. As to expression, expressed in the brain (at protein level). Isoform A: Expressed only in neuronal tissue and skeletal muscle. Isoform B: Widely expressed.

The protein resides in the cell membrane. It is found in the membrane. Its subcellular location is the coated pit. In terms of biological role, component of the adaptor protein complex 2 (AP-2). Adaptor protein complexes function in protein transport via transport vesicles in different membrane traffic pathways. Adaptor protein complexes are vesicle coat components and appear to be involved in cargo selection and vesicle formation. AP-2 is involved in clathrin-dependent endocytosis in which cargo proteins are incorporated into vesicles surrounded by clathrin (clathrin-coated vesicles, CCVs) which are destined for fusion with the early endosome. The clathrin lattice serves as a mechanical scaffold but is itself unable to bind directly to membrane components. Clathrin-associated adaptor protein (AP) complexes which can bind directly to both the clathrin lattice and to the lipid and protein components of membranes are considered to be the major clathrin adaptors contributing the CCV formation. AP-2 also serves as a cargo receptor to selectively sort the membrane proteins involved in receptor-mediated endocytosis. AP-2 seems to play a role in the recycling of synaptic vesicle membranes from the presynaptic surface. AP-2 recognizes Y-X-X-[FILMV] (Y-X-X-Phi) and [ED]-X-X-X-L-[LI] endocytosis signal motifs within the cytosolic tails of transmembrane cargo molecules. AP-2 may also play a role in maintaining normal post-endocytic trafficking through the ARF6-regulated, non-clathrin pathway. The AP-2 alpha subunit binds polyphosphoinositide-containing lipids, positioning AP-2 on the membrane. During long-term potentiation in hippocampal neurons, AP-2 is responsible for the endocytosis of ADAM10. The AP-2 alpha subunit acts via its C-terminal appendage domain as a scaffolding platform for endocytic accessory proteins. The AP-2 alpha and AP-2 sigma subunits are thought to contribute to the recognition of the [ED]-X-X-X-L-[LI] motif. In Mus musculus (Mouse), this protein is AP-2 complex subunit alpha-1 (Ap2a1).